Consider the following 105-residue polypeptide: MADFLGMMKQAAQLQSKMKAMQEELEHIEVEGISGGGLVSVRMTAKMEVKTIKIDPSLINADEAGVLEDLLVTALADAHRKAESAMQEKMQALTGGLSLPPGLGL.

This sequence belongs to the YbaB/EbfC family. Homodimer.

It is found in the cytoplasm. It localises to the nucleoid. Binds to DNA and alters its conformation. May be involved in regulation of gene expression, nucleoid organization and DNA protection. This is Nucleoid-associated protein RPC_4847 from Rhodopseudomonas palustris (strain BisB18).